Consider the following 79-residue polypeptide: Morintide mO1 (79 aa).

The N-terminal stretch at 1-20 (MAKLSFLSLFLLCLVATATA) is a signal peptide. The region spanning 21 to 63 (QNCGRQAGNRACANQLCCSQYGFCGSTSEYCSRANGCQSNCRG) is the Chitin-binding type-1 domain. Disulfide bonds link cysteine 23-cysteine 38, cysteine 32-cysteine 44, cysteine 37-cysteine 51, and cysteine 57-cysteine 61. A propeptide spanning residues 64 to 79 (GGGADGAGGEAGGGGP) is cleaved from the precursor.

In terms of tissue distribution, leaves (at protein level).

In terms of biological role, chitin-binding protein which functions in defense against chitin-containing fungal pathogens. Inhibits the growth of budding hyphae in A.alternata and A.brassiciola. The sequence is that of Morintide mO1 from Moringa oleifera (Horseradish tree).